A 422-amino-acid chain; its full sequence is MDRETFHSCSSLVKLPRQIHQQHCSSHFIEYIEREIPYSKFFKNYLIPNQPCMFSKKFTEEWNCRKKWVTAEGKPNLQRLLHEFDETPVPVANCSVKEYNANPKQIMPFKEFIQYWRESIQNGHSSPKGCLYLKDWHMQRNFPEHNIYKTPIYFSSDWLNEYWDTIEVDDYRFVYMGPKGSWTPFHADVFRSYSWSANICGRKKWLLYPPGQEDFLRDCHGNLAYDVTAPILQDKGLYAQFEEACQPLEIIQEAGEIIFVPSGWHHQVYNLEDTISINHNWLNGCNLDIMWQFLQDELSSVQREIEEWRDTMDTWHQHCQVIMKSCTGIDYAEFASFLKTIANNRISFLNSSPRNADSCQDLLAESLCALGPHHAAFDLQRVLHIFEIMLNNEDFKRLDPATLSFKPEDLLQEIREAIRTIV.

A JmjC domain is found at 139-298; sequence QRNFPEHNIY…IMWQFLQDEL (160 aa). His-186, Asp-188, and His-266 together coordinate Fe cation.

This sequence belongs to the JMJD6 family. Fe(2+) serves as cofactor.

The protein resides in the cytoplasm. The catalysed reaction is L-lysyl-[protein] + 2-oxoglutarate + O2 = 4-hydroxy-L-lysyl-[protein] + succinate + CO2. Catalyzes the 2-oxoglutarate and iron-dependent C4-lysyl hydroxylation of ETF1 at 'Lys-63' thereby promoting the translational termination efficiency of ETF1. The sequence is that of 2-oxoglutarate and iron-dependent oxygenase JMJD4 (jmjd4) from Danio rerio (Zebrafish).